Reading from the N-terminus, the 387-residue chain is Sulfopyruvate decarboxylase (387 aa).

This sequence belongs to the TPP enzyme family. The cofactor is thiamine diphosphate.

It carries out the reaction 3-sulfopyruvate + H(+) = sulfoacetaldehyde + CO2. Its pathway is cofactor biosynthesis; coenzyme M biosynthesis. Involved in the biosynthesis of the coenzyme M (2-mercaptoethanesulfonic acid). Catalyzes the decarboxylation of sulfopyruvate to sulfoacetaldehyde. Is not able to decarboxylate the analogous compounds 2-oxoglutarate or 2-oxosuberate. This is Sulfopyruvate decarboxylase from Methanosarcina acetivorans (strain ATCC 35395 / DSM 2834 / JCM 12185 / C2A).